Here is a 907-residue protein sequence, read N- to C-terminus: MANETQKVGAIHFPFPFTPYSIQEDFMAELYRVLEAGKIGIFESPTGTGKSLSLICGALSWLRDFEQKKREEEARLLETGTGPLHDEKDESLCLSSSCEGAAGTPRPAGEPAWVTQFVQKKEERDLVDRLKVEQARRKQREERLQQLQHRVQLKYAAKRLRQEEEETENLLRLSREMLETGPEAERLEQLESGEEELVLAEYESDEEKKVASGHRVDEDEDDLEEEHITKIYHCSRTHSQLAQFVHEVKKSPFGKDVRLVSLGSRQNLCVNEDVRSLGSVQLINDRCVDMQRSRHEKKKGAEEEKPKRRRQEKQAACPFYNHEQMGLLRDEALAEVKDMEQLLALGKEARACPYYRSRLAIPAAKLVVLPYQMLLHAATRQAAGIRLQDQVVIIDEAHNLIDTITGMHSVEVSGSQLCQAHSQLLQYMERYGKRLKAKNLMYLKQILYLLEKFVAVLGGNIKQNPNTQSLSQTGTELKTINDFLFQSQIDNINLFKVQRYCEKSMISRKLFGFTERYGAVFSSREQPKLAGFQQFLQSLQPRTTEALAAPADESQASVPQPASPLMHIEGFLAALTTANQDGRVILSRQGSLSESTLKFLLLNPAVHFAQVVKECRAVVIAGGTMQPVSDFRQQLLACAGVEAERVVEFSCGHVIPPDNIPLVICSGISNQPLEFTFQKRDLPQMMDEVGRILCNLCGVVSGGVVCFFSSYEYLRQVHAHWEKGGLLGRLAARKKIFQEPKSAHQVEQVLLAYSRCIQACGQERGQVTEALLLSVVGGKMSEGINFSDNLGRCVVMVGMPFPNIRSAELQEKMAYLDQTLPRAPGQAPPGKALVENLCMKAVNQSIGRAIRHQKDFASIVLLDQRYARPPVLAKLPAWIRASVEVKATFGPAIAAVQKFHREKSASS.

Residues 9–447 (GAIHFPFPFT…KNLMYLKQIL (439 aa)) form the Helicase ATP-binding domain. 44-51 (SPTGTGKS) is an ATP binding site. A disordered region spans residues 202–222 (YESDEEKKVASGHRVDEDEDD). Residues 206-217 (EEKKVASGHRVD) show a composition bias toward basic and acidic residues. The residue at position 264 (serine 264) is a Phosphoserine. Cysteine 269 and cysteine 287 together coordinate [4Fe-4S] cluster. A compositionally biased stretch (basic and acidic residues) spans 291–306 (QRSRHEKKKGAEEEKP). The tract at residues 291–314 (QRSRHEKKKGAEEEKPKRRRQEKQ) is disordered. [4Fe-4S] cluster is bound by residues cysteine 317 and cysteine 352. A DEAH motif is present at residues 395 to 398 (DEAH).

It belongs to the DEAD box helicase family. DEAH subfamily. DDX11/CHL1 sub-subfamily. The cofactor is [4Fe-4S] cluster.

Its subcellular location is the nucleus. It localises to the nucleolus. Its function is as follows. Putative DNA helicase. The protein is Putative ATP-dependent DNA helicase DDX11-like protein 8 (DDX11L8) of Homo sapiens (Human).